The sequence spans 454 residues: tRNA modification GTPase MnmE (454 aa).

Residues Arg23, Glu80, and Lys120 each contribute to the (6S)-5-formyl-5,6,7,8-tetrahydrofolate site. A TrmE-type G domain is found at 216-377; it reads GMKVVIAGRP…LRNHLKQSMG (162 aa). Asn226 provides a ligand contact to K(+). GTP-binding positions include 226–231, 245–251, 270–273, 335–338, and 358–360; these read NAGKSS, TDIAGTT, DTAG, NKAD, and SAR. Ser230 contributes to the Mg(2+) binding site. Residues Thr245, Ile247, and Thr250 each coordinate K(+). Thr251 contacts Mg(2+). Residue Lys454 coordinates (6S)-5-formyl-5,6,7,8-tetrahydrofolate.

It belongs to the TRAFAC class TrmE-Era-EngA-EngB-Septin-like GTPase superfamily. TrmE GTPase family. In terms of assembly, homodimer. Heterotetramer of two MnmE and two MnmG subunits. K(+) serves as cofactor.

Its subcellular location is the cytoplasm. Its function is as follows. Exhibits a very high intrinsic GTPase hydrolysis rate. Involved in the addition of a carboxymethylaminomethyl (cmnm) group at the wobble position (U34) of certain tRNAs, forming tRNA-cmnm(5)s(2)U34. This Escherichia coli O127:H6 (strain E2348/69 / EPEC) protein is tRNA modification GTPase MnmE.